The primary structure comprises 570 residues: Protein misato homolog 1 (570 aa).

Serine 495 bears the Phosphoserine mark.

Belongs to the misato family.

The protein localises to the mitochondrion outer membrane. It is found in the cytoplasm. Involved in the regulation of mitochondrial distribution and morphology. Required for mitochondrial fusion and mitochondrial network formation. This chain is Protein misato homolog 1 (MSTO1), found in Pongo pygmaeus (Bornean orangutan).